Reading from the N-terminus, the 107-residue chain is MSAFSLSDLERIVAKRAAASPDESWTAKLVAAGQERAAKKLGEEAVEAVIAAIAQDRDGLKNEAADLLYHLLVVLKIADIPLSDVFAELERRTGQTGLAEKAARPTP.

It belongs to the PRA-PH family.

The protein localises to the cytoplasm. The catalysed reaction is 1-(5-phospho-beta-D-ribosyl)-ATP + H2O = 1-(5-phospho-beta-D-ribosyl)-5'-AMP + diphosphate + H(+). It functions in the pathway amino-acid biosynthesis; L-histidine biosynthesis; L-histidine from 5-phospho-alpha-D-ribose 1-diphosphate: step 2/9. This is Phosphoribosyl-ATP pyrophosphatase (hisE) from Agrobacterium fabrum (strain C58 / ATCC 33970) (Agrobacterium tumefaciens (strain C58)).